Here is a 229-residue protein sequence, read N- to C-terminus: Protein MC132 (229 aa).

Interacts with host RELA (via RHD domain), ELOB, ELOC and CUL5; these interactions induce the proteasomal degradation of host RELA.

Its subcellular location is the host cytoplasm. Functionally, inhibits host NF-kappa-B activation stimulated by IL-1 and multiple PRR viral detection pathways. Targets host NF-kappa-B component RELA/p65 for ubiquitin-dependent proteasomal degradation. The chain is Protein MC132 (MC132) from Homo sapiens (Human).